The sequence spans 68 residues: MPQLDTSTWSITIVSMIITLFIMFQLKLSKYSYPSSPELKLTKTPTHTTPWESKWTKTYLPLSLPQQS.

Residues threonine 8–phenylalanine 24 form a helical membrane-spanning segment. Position 54 is an N6-acetyllysine; alternate (lysine 54). N6-succinyllysine; alternate is present on lysine 54. Lysine 57 carries the N6-acetyllysine modification.

This sequence belongs to the ATPase protein 8 family. In terms of assembly, component of the ATP synthase complex composed at least of ATP5F1A/subunit alpha, ATP5F1B/subunit beta, ATP5MC1/subunit c (homooctomer), MT-ATP6/subunit a, MT-ATP8/subunit 8, ATP5ME/subunit e, ATP5MF/subunit f, ATP5MG/subunit g, ATP5MK/subunit k, ATP5MJ/subunit j, ATP5F1C/subunit gamma, ATP5F1D/subunit delta, ATP5F1E/subunit epsilon, ATP5PF/subunit F6, ATP5PB/subunit b, ATP5PD/subunit d, ATP5PO/subunit OSCP. ATP synthase complex consists of a soluble F(1) head domain (subunits alpha(3) and beta(3)) - the catalytic core - and a membrane F(0) domain - the membrane proton channel (subunits c, a, 8, e, f, g, k and j). These two domains are linked by a central stalk (subunits gamma, delta, and epsilon) rotating inside the F1 region and a stationary peripheral stalk (subunits F6, b, d, and OSCP). Interacts with PRICKLE3.

Its subcellular location is the mitochondrion membrane. Functionally, subunit 8, of the mitochondrial membrane ATP synthase complex (F(1)F(0) ATP synthase or Complex V) that produces ATP from ADP in the presence of a proton gradient across the membrane which is generated by electron transport complexes of the respiratory chain. ATP synthase complex consist of a soluble F(1) head domain - the catalytic core - and a membrane F(1) domain - the membrane proton channel. These two domains are linked by a central stalk rotating inside the F(1) region and a stationary peripheral stalk. During catalysis, ATP synthesis in the catalytic domain of F(1) is coupled via a rotary mechanism of the central stalk subunits to proton translocation. In vivo, can only synthesize ATP although its ATP hydrolase activity can be activated artificially in vitro. Part of the complex F(0) domain. The polypeptide is ATP synthase F(0) complex subunit 8 (Ceratotherium simum (White rhinoceros)).